The sequence spans 227 residues: 6-phosphogluconolactonase (227 aa).

This sequence belongs to the glucosamine/galactosamine-6-phosphate isomerase family. 6-phosphogluconolactonase subfamily.

The catalysed reaction is 6-phospho-D-glucono-1,5-lactone + H2O = 6-phospho-D-gluconate + H(+). It functions in the pathway carbohydrate degradation; pentose phosphate pathway; D-ribulose 5-phosphate from D-glucose 6-phosphate (oxidative stage): step 2/3. Hydrolysis of 6-phosphogluconolactone to 6-phosphogluconate. The protein is 6-phosphogluconolactonase (pgl) of Helicobacter pylori (strain ATCC 700392 / 26695) (Campylobacter pylori).